Here is a 475-residue protein sequence, read N- to C-terminus: Tryptophan--tRNA ligase, cytoplasmic (475 aa).

The WHEP-TRS domain occupies 12 to 68; the sequence is SPQELFSSIAAQGELVKSLKARKAPKEEIDSAVKMLLSLKTSYKEAMGEDYKADCPP. Residues 61–87 form a disordered region; sequence DYKADCPPGNSTPDSHGDPEAVDDKED. Lys158 carries the post-translational modification N6-succinyllysine. Positions 168-177 match the 'HIGH' region motif; sequence PSSEAMHVGH. The 'KMSKS' region motif lies at 353 to 357; the sequence is KMSAS. Position 355 is a phosphoserine (Ser355).

The protein belongs to the class-I aminoacyl-tRNA synthetase family. In terms of assembly, homodimer. Interacts with oxidized form of GAPDH. In terms of processing, proteolytic cleavage generates 2 forms; T1-TrpRS and T2-TrpRS.

Its subcellular location is the cytoplasm. It catalyses the reaction tRNA(Trp) + L-tryptophan + ATP = L-tryptophyl-tRNA(Trp) + AMP + diphosphate + H(+). In terms of biological role, catalyzes the attachment of tryptophan to tRNA(Trp) in a two-step reaction: tryptophan is first activated by ATP to form Trp-AMP and then transferred to the acceptor end of the tRNA(Trp). Could also possess an angiostatic activity. The sequence is that of Tryptophan--tRNA ligase, cytoplasmic (WARS1) from Oryctolagus cuniculus (Rabbit).